A 253-amino-acid chain; its full sequence is MTRYKATIAYDGTDFAGFQSQTNQRTVQEEIEKVLSKLNSFEPVILQGSGRTDSGVHAFGQVIHFDLNGKARDLERLRFGLDTQTPADIAVKKVELVPDDWHARYQKHEKTYEYYLENSVTRSPFHRHSKAYFRYPLNFELMQGAMAKLVGQHDFTGFTASGSSVDDKVRTIYQAEIIQLDKENFKFIFRGNGFLYKQVRNMVGTVIKIGNDRMPVSQIDKILTSKNRNFAGPTAAPEGLYLKEVKYEPINEI.

The active-site Nucleophile is the D53. Y112 serves as a coordination point for substrate.

The protein belongs to the tRNA pseudouridine synthase TruA family. In terms of assembly, homodimer.

The catalysed reaction is uridine(38/39/40) in tRNA = pseudouridine(38/39/40) in tRNA. Formation of pseudouridine at positions 38, 39 and 40 in the anticodon stem and loop of transfer RNAs. In Lactococcus lactis subsp. cremoris (strain SK11), this protein is tRNA pseudouridine synthase A.